Consider the following 429-residue polypeptide: MKVLVIGNGGREHALAWKAAQSPLVDTVFVAPGNAGTALEPALQNVAIGVTDIPALLSFAQNEKIDLTIVGPEAPLVIGVVDAFRAAGLKIFGPTEGAAQLEGSKAFTKDFLARHQIPTAEYQNFTEIEPALAYLREKGAPIVIKADGLAAGKGVIVAMTLEEAEAAVHDMLAGNAFGDAGHRIVIEEFLDGEEASFIVMVDGEHVLPMATSQDHKRVGNGDTGPNTGGMGAYSPAPVVTDEVHQRTMERIIWPTVKGMAAEGNTYTGFLYAGLMIDKQGNPKVIEFNCRFGDPETQPIMLRMKSDLVDLCLAACDGKLDEKTSEWDERASLGVVIAAGGYPGSYSTGDEIHGLPLEEVADGKVFHAGTKLADDDRVLTSGGRVLCATALGHTVAEAQKRAYALMTDIRWDGSFSRNDIGWRAIEREQN.

An ATP-grasp domain is found at 109-316 (KDFLARHQIP…LVDLCLAACD (208 aa)). ATP is bound at residue 135–196 (LREKGAPIVI…EEFLDGEEAS (62 aa)). Positions 286 and 288 each coordinate Mg(2+).

Belongs to the GARS family. In terms of assembly, monomer. Mg(2+) serves as cofactor. Requires Mn(2+) as cofactor.

It carries out the reaction 5-phospho-beta-D-ribosylamine + glycine + ATP = N(1)-(5-phospho-beta-D-ribosyl)glycinamide + ADP + phosphate + H(+). It functions in the pathway purine metabolism; IMP biosynthesis via de novo pathway; N(1)-(5-phospho-D-ribosyl)glycinamide from 5-phospho-alpha-D-ribose 1-diphosphate: step 2/2. In Salmonella typhi, this protein is Phosphoribosylamine--glycine ligase.